Consider the following 626-residue polypeptide: Coilin (626 aa).

Ser148 and Ser162 each carry phosphoserine. 2 disordered regions span residues 253 to 309 (LTSQ…ISSN) and 382 to 433 (RGCE…NKKS). Over residues 260–292 (STPSESDSSSSESSSSVSDSSDLSSTSDSSSGD) the composition is skewed to low complexity. Positions 382-395 (RGCENTEKPSEEGK) are enriched in basic and acidic residues. A compositionally biased stretch (polar residues) spans 396–417 (NFTTPLSDSVESENTWSNTLRS).

Belongs to the coilin family. Interacts with tgs1; both proteins are required to maintain Cajal body integrity. Interacts with U2 and U5 snRNAs.

The protein localises to the cytoplasm. The protein resides in the nucleus. It is found in the cajal body. Component of nuclear coiled bodies, also known as Cajal bodies or CBs, which are involved in the modification and assembly of nucleoplasmic snRNPs. Required for proper pre-mRNA splicing. The polypeptide is Coilin (Schizosaccharomyces pombe (strain 972 / ATCC 24843) (Fission yeast)).